A 95-amino-acid polypeptide reads, in one-letter code: UPF0235 protein Swoo_1329 (95 aa).

The protein belongs to the UPF0235 family.

The chain is UPF0235 protein Swoo_1329 from Shewanella woodyi (strain ATCC 51908 / MS32).